The chain runs to 448 residues: Death-associated protein kinase 3 (448 aa).

The region spanning 13-275 (YEMGEELGSG…IAQSLEHSWI (263 aa)) is the Protein kinase domain. ATP is bound by residues 19-27 (LGSGQFAIV) and lysine 42. Catalysis depends on aspartate 139, which acts as the Proton acceptor. The segment at 161–204 (DFGIAHRIEAGSEFKNIFGTPEFVAPEIVNYEPLGLEADMWSIG) is activation segment. Phosphothreonine occurs at positions 180 and 225. Residue threonine 265 is modified to Phosphothreonine; by autocatalysis. Threonine 265 is subject to Phosphothreonine; by ROCK1. Serine 304 is subject to Phosphoserine; by DAPK1. Residue serine 306 is modified to Phosphoserine; by autocatalysis and DAPK1. A phosphoserine; by DAPK1 mark is found at serine 307, serine 313, and serine 321. The interval 390–448 (AQEEARAALLGAGGLKRRLCRLENRYDALAAQVAAEVQFVRDLVRALEQERLQAECGVR) is interaction with CDC5L. The interval 422–436 (VAAEVQFVRDLVRAL) is leucine-zipper.

This sequence belongs to the protein kinase superfamily. CAMK Ser/Thr protein kinase family. DAP kinase subfamily. In terms of assembly, homooligomer in its kinase-active form (homotrimers and homodimers are reported); monomeric in its kinase-inactive form. Homodimerization is required for activation segment autophosphorylation. Interacts with DAXX, PAWR, ATF4, NLK, TCF7L2, UBE2D1, UBE2D2, UBE2D3, and CDC5L. Interacts with AR; enhanced by AATF. Interacts with LUZP1; the interaction is likely to occur throughout the cell cycle and reduces the LUZP1-mediated suppression of MYL9 phosphorylation. The cofactor is Mg(2+). Ubiquitinated. Ubiquitination mediated by the UBE2D3 E3 ligase does not lead to proteasomal degradation, but influences promyelocytic leukemia protein nuclear bodies (PML-NBs) formation in the nucleus. In terms of processing, the phosphorylation status is critical for kinase activity, oligomerization and intracellular localization. Phosphorylation at Thr-180, Thr-225 and Thr-265 is essential for activity. The phosphorylated form is localized in the cytoplasm and nuclear translocation or retention is maximal when it is not phosphorylated. Phosphorylation increases the trimeric form, and its dephosphorylation favors a kinase-inactive monomeric form. Highly expressed in heart, brain, lung, skeletal muscle, kidney and testis. Lower levels in liver and spleen.

The protein localises to the nucleus. It is found in the PML body. It localises to the cytoplasm. The protein resides in the cytoskeleton. Its subcellular location is the microtubule organizing center. The protein localises to the centrosome. It is found in the chromosome. It localises to the centromere. The protein resides in the spindle. Its subcellular location is the midbody. The catalysed reaction is L-seryl-[protein] + ATP = O-phospho-L-seryl-[protein] + ADP + H(+). It catalyses the reaction L-threonyl-[protein] + ATP = O-phospho-L-threonyl-[protein] + ADP + H(+). Its activity is regulated as follows. A sequential activation is proposed: autophosphorylation at consensus sites is leading to dimerization of the catalytic domain and activation segment exchange (producing an active confirmation of both kinase modules in trans) followed by phosphorylation at Thr-180 in the activation segment and at other regulatory sites. Phosphorylation at Thr-180, Thr-225 and Thr-265 is essential for activity. Inhibited by pyridone 6 (K00225), a potent, ATP-competitive inhibitor. Phosphorylation at Thr-180, Thr-225 and Thr-265 is essential for activity. Its function is as follows. Serine/threonine kinase which is involved in the regulation of apoptosis, autophagy, transcription, translation and actin cytoskeleton reorganization. Regulates both type I (caspase-dependent) apoptotic and type II (caspase-independent) autophagic cell deaths signal, depending on the cellular setting. Involved in formation of promyelocytic leukemia protein nuclear body (PML-NB). Involved in apoptosis involving PAWR which mediates cytoplasmic relocation; in vitro phosphorylates PAWR. Regulates myosin phosphorylation in both smooth muscle and non-muscle cells. In smooth muscle, regulates myosin either directly by phosphorylating MYL12B and MYL9 or through inhibition of smooth muscle myosin phosphatase (SMPP1M) via phosphorylation of PPP1R12A; the inhibition of SMPP1M functions to enhance muscle responsiveness to Ca(2+) and promote a contractile state. Phosphorylates MYL12B in non-muscle cells leading to reorganization of actin cytoskeleton such as in regulation of cell polarity and cell migration. Positively regulates canonical Wnt/beta-catenin signaling through interaction with NLK and TCF7L2; disrupts the NLK-TCF7L2 complex thereby influencing the phosphorylation of TCF7L2 by NLK. Phosphorylates STAT3 and enhances its transcriptional activity. Enhances transcription from AR-responsive promoters in a hormone- and kinase-dependent manner. Phosphorylates histone H3 on 'Thr-11' at centromeres during mitosis. Phosphorylates RPL13A on 'Ser-77' upon interferon-gamma activation which is causing RPL13A release from the ribosome, RPL13A association with the GAIT complex and its subsequent involvement in transcript-selective translation inhibition. This chain is Death-associated protein kinase 3 (Dapk3), found in Mus musculus (Mouse).